A 540-amino-acid polypeptide reads, in one-letter code: Chaperonin GroEL (540 aa).

Residues 29–32 (TLGP), 86–90 (DGTTT), Gly-413, 476–478 (NAA), and Asp-492 each bind ATP.

This sequence belongs to the chaperonin (HSP60) family. In terms of assembly, forms a cylinder of 14 subunits composed of two heptameric rings stacked back-to-back. Interacts with the co-chaperonin GroES.

Its subcellular location is the cytoplasm. The enzyme catalyses ATP + H2O + a folded polypeptide = ADP + phosphate + an unfolded polypeptide.. Together with its co-chaperonin GroES, plays an essential role in assisting protein folding. The GroEL-GroES system forms a nano-cage that allows encapsulation of the non-native substrate proteins and provides a physical environment optimized to promote and accelerate protein folding. This Streptococcus agalactiae protein is Chaperonin GroEL.